The primary structure comprises 248 residues: Probable transcriptional regulatory protein Avi_3631 (248 aa).

It belongs to the TACO1 family.

It localises to the cytoplasm. This is Probable transcriptional regulatory protein Avi_3631 from Allorhizobium ampelinum (strain ATCC BAA-846 / DSM 112012 / S4) (Agrobacterium vitis (strain S4)).